Here is an 84-residue protein sequence, read N- to C-terminus: Exodeoxyribonuclease 7 small subunit (84 aa).

The protein belongs to the XseB family. In terms of assembly, heterooligomer composed of large and small subunits.

Its subcellular location is the cytoplasm. The catalysed reaction is Exonucleolytic cleavage in either 5'- to 3'- or 3'- to 5'-direction to yield nucleoside 5'-phosphates.. Bidirectionally degrades single-stranded DNA into large acid-insoluble oligonucleotides, which are then degraded further into small acid-soluble oligonucleotides. The protein is Exodeoxyribonuclease 7 small subunit of Azoarcus sp. (strain BH72).